The primary structure comprises 594 residues: Interactor of HORMAD1 protein 1 (594 aa).

3 coiled-coil regions span residues valine 109 to leucine 135, glutamine 165 to valine 189, and glutamate 219 to leucine 245. A compositionally biased stretch (basic and acidic residues) spans valine 434–glutamine 443. The disordered stretch occupies residues valine 434–glycine 454. Residues glutamine 444–glycine 454 are compositionally biased toward basic residues. Phosphoserine occurs at positions 588 and 589.

As to quaternary structure, part of the MCD recombinosome complex, at least composed of IHO1, REC114 and MEI4. Interacts with REC114. Interacts with MEI4. Interacts with HORMAD1. Interacts with ANKRD31.

Its subcellular location is the chromosome. Functionally, required for DNA double-strand breaks (DSBs) formation in unsynapsed regions during meiotic recombination. Probably acts by forming a complex with MEI4 and REC114, which activates DSBs formation in unsynapsed regions, an essential step to ensure completion of synapsis. Not required for HORMAD1 functions in pairing-independent synaptonemal complex formation, ATR recruitment to unsynapsed axes, meiotic silencing of unsynapsed chromatin (MSUC) or meiotic surveillance. The polypeptide is Interactor of HORMAD1 protein 1 (Homo sapiens (Human)).